Here is a 691-residue protein sequence, read N- to C-terminus: Elongation factor G (691 aa).

One can recognise a tr-type G domain in the interval 8-282; the sequence is ERVRNIGIAA…AVVDYLPAPV (275 aa). Residues 17–24, 81–85, and 135–138 contribute to the GTP site; these read AHIDAGKT, DTPGH, and NKMD.

The protein belongs to the TRAFAC class translation factor GTPase superfamily. Classic translation factor GTPase family. EF-G/EF-2 subfamily.

Its subcellular location is the cytoplasm. Its function is as follows. Catalyzes the GTP-dependent ribosomal translocation step during translation elongation. During this step, the ribosome changes from the pre-translocational (PRE) to the post-translocational (POST) state as the newly formed A-site-bound peptidyl-tRNA and P-site-bound deacylated tRNA move to the P and E sites, respectively. Catalyzes the coordinated movement of the two tRNA molecules, the mRNA and conformational changes in the ribosome. The polypeptide is Elongation factor G (Prochlorococcus marinus (strain MIT 9303)).